The primary structure comprises 100 residues: Large ribosomal subunit protein eL36A (100 aa).

Residue Thr-2 is modified to N-acetylthreonine.

Belongs to the eukaryotic ribosomal protein eL36 family. Component of the large ribosomal subunit (LSU). Mature yeast ribosomes consist of a small (40S) and a large (60S) subunit. The 40S small subunit contains 1 molecule of ribosomal RNA (18S rRNA) and 33 different proteins (encoded by 57 genes). The large 60S subunit contains 3 rRNA molecules (25S, 5.8S and 5S rRNA) and 46 different proteins (encoded by 81 genes). N-terminally acetylated by acetyltransferase NatA.

Its subcellular location is the cytoplasm. Its function is as follows. Component of the ribosome, a large ribonucleoprotein complex responsible for the synthesis of proteins in the cell. The small ribosomal subunit (SSU) binds messenger RNAs (mRNAs) and translates the encoded message by selecting cognate aminoacyl-transfer RNA (tRNA) molecules. The large subunit (LSU) contains the ribosomal catalytic site termed the peptidyl transferase center (PTC), which catalyzes the formation of peptide bonds, thereby polymerizing the amino acids delivered by tRNAs into a polypeptide chain. The nascent polypeptides leave the ribosome through a tunnel in the LSU and interact with protein factors that function in enzymatic processing, targeting, and the membrane insertion of nascent chains at the exit of the ribosomal tunnel. The chain is Large ribosomal subunit protein eL36A from Saccharomyces cerevisiae (strain ATCC 204508 / S288c) (Baker's yeast).